The sequence spans 929 residues: Isoleucine--tRNA ligase (929 aa).

The 'HIGH' region motif lies at 57-67 (PYANGNIHVGH). An L-isoleucyl-5'-AMP-binding site is contributed by E554. Residues 595 to 599 (KMSKS) carry the 'KMSKS' region motif. Residue K598 coordinates ATP. 4 residues coordinate Zn(2+): C888, C891, C908, and C911.

This sequence belongs to the class-I aminoacyl-tRNA synthetase family. IleS type 1 subfamily. Monomer. Requires Zn(2+) as cofactor.

It is found in the cytoplasm. The enzyme catalyses tRNA(Ile) + L-isoleucine + ATP = L-isoleucyl-tRNA(Ile) + AMP + diphosphate. Functionally, catalyzes the attachment of isoleucine to tRNA(Ile). As IleRS can inadvertently accommodate and process structurally similar amino acids such as valine, to avoid such errors it has two additional distinct tRNA(Ile)-dependent editing activities. One activity is designated as 'pretransfer' editing and involves the hydrolysis of activated Val-AMP. The other activity is designated 'posttransfer' editing and involves deacylation of mischarged Val-tRNA(Ile). The chain is Isoleucine--tRNA ligase from Streptococcus thermophilus (strain CNRZ 1066).